Reading from the N-terminus, the 207-residue chain is N-(5'-phosphoribosyl)anthranilate isomerase (207 aa).

The protein belongs to the TrpF family.

It carries out the reaction N-(5-phospho-beta-D-ribosyl)anthranilate = 1-(2-carboxyphenylamino)-1-deoxy-D-ribulose 5-phosphate. It functions in the pathway amino-acid biosynthesis; L-tryptophan biosynthesis; L-tryptophan from chorismate: step 3/5. The chain is N-(5'-phosphoribosyl)anthranilate isomerase from Legionella pneumophila (strain Paris).